Consider the following 82-residue polypeptide: DNA-directed RNA polymerase subunit omega (82 aa).

The protein belongs to the RNA polymerase subunit omega family. In terms of assembly, in cyanobacteria the RNAP catalytic core is composed of 2 alpha, 1 beta, 1 beta', 1 gamma and 1 omega subunit. When a sigma factor is associated with the core the holoenzyme is formed, which can initiate transcription.

The catalysed reaction is RNA(n) + a ribonucleoside 5'-triphosphate = RNA(n+1) + diphosphate. Functionally, promotes RNA polymerase assembly. Latches the N- and C-terminal regions of the beta' subunit thereby facilitating its interaction with the beta and alpha subunits. The sequence is that of DNA-directed RNA polymerase subunit omega from Synechococcus sp. (strain CC9902).